A 228-amino-acid chain; its full sequence is 3,4-dihydroxy-2-butanone 4-phosphate synthase (228 aa).

D-ribulose 5-phosphate-binding positions include 37–38 (RE), aspartate 42, 150–154 (RPGHT), and glutamate 174. Mg(2+) is bound at residue glutamate 38. Histidine 153 provides a ligand contact to Mg(2+).

It belongs to the DHBP synthase family. Homodimer. Mg(2+) is required as a cofactor. It depends on Mn(2+) as a cofactor.

It catalyses the reaction D-ribulose 5-phosphate = (2S)-2-hydroxy-3-oxobutyl phosphate + formate + H(+). It participates in cofactor biosynthesis; riboflavin biosynthesis; 2-hydroxy-3-oxobutyl phosphate from D-ribulose 5-phosphate: step 1/1. Its function is as follows. Catalyzes the conversion of D-ribulose 5-phosphate to formate and 3,4-dihydroxy-2-butanone 4-phosphate. This Chloroherpeton thalassium (strain ATCC 35110 / GB-78) protein is 3,4-dihydroxy-2-butanone 4-phosphate synthase.